Consider the following 160-residue polypeptide: Putative 4-hydroxy-4-methyl-2-oxoglutarate aldolase (160 aa).

Substrate contacts are provided by residues 78–81 (GDVI) and R100. A divalent metal cation is bound at residue D101.

It belongs to the class II aldolase/RraA-like family. As to quaternary structure, homotrimer. Requires a divalent metal cation as cofactor.

The enzyme catalyses 4-hydroxy-4-methyl-2-oxoglutarate = 2 pyruvate. It catalyses the reaction oxaloacetate + H(+) = pyruvate + CO2. In terms of biological role, catalyzes the aldol cleavage of 4-hydroxy-4-methyl-2-oxoglutarate (HMG) into 2 molecules of pyruvate. Also contains a secondary oxaloacetate (OAA) decarboxylase activity due to the common pyruvate enolate transition state formed following C-C bond cleavage in the retro-aldol and decarboxylation reactions. The polypeptide is Putative 4-hydroxy-4-methyl-2-oxoglutarate aldolase (Mycolicibacterium paratuberculosis (strain ATCC BAA-968 / K-10) (Mycobacterium paratuberculosis)).